A 444-amino-acid polypeptide reads, in one-letter code: DNA primase DnaG (444 aa).

The Toprim domain maps to 186–260 (DSIIVVEGRN…EVDFVARAPP (75 aa)). Positions 192, 234, and 236 each coordinate Mg(2+).

The protein belongs to the archaeal DnaG primase family. In terms of assembly, forms a ternary complex with MCM helicase and DNA. Component of the archaeal exosome complex. Requires Mg(2+) as cofactor.

The enzyme catalyses ssDNA + n NTP = ssDNA/pppN(pN)n-1 hybrid + (n-1) diphosphate.. Its function is as follows. RNA polymerase that catalyzes the synthesis of short RNA molecules used as primers for DNA polymerase during DNA replication. Also part of the exosome, which is a complex involved in RNA degradation. Acts as a poly(A)-binding protein that enhances the interaction between heteromeric, adenine-rich transcripts and the exosome. The sequence is that of DNA primase DnaG from Thermoplasma volcanium (strain ATCC 51530 / DSM 4299 / JCM 9571 / NBRC 15438 / GSS1).